The primary structure comprises 733 residues: Submandibular gland protein C (733 aa).

A signal peptide spans 1–20 (MKLILLYLAVVLCFVGKARS). Residues 48–91 (KSSGGSKDYNLSDGGKSNSRKNLSPATGGSATQQSNLDDSHAPN) are disordered. N57 carries an N-linked (GlcNAc...) asparagine glycan. Residues 62 to 84 (GKSNSRKNLSPATGGSATQQSNL) show a composition bias toward polar residues. Residues N141 and N187 are each glycosylated (N-linked (GlcNAc...) asparagine). Disordered regions lie at residues 172–204 (GQQA…ADKP), 249–330 (LTED…NSSN), 369–450 (LTED…NSSN), and 496–733 (SVTE…PSVA). Over residues 186-199 (ENSSLSTGSATSNK) the composition is skewed to polar residues. Low complexity predominate over residues 256–270 (TSTSASVSGDSSTSS). Over residues 300-318 (GSKQNVEDSTLSTGSATSN) the composition is skewed to polar residues. An N-linked (GlcNAc...) asparagine glycan is attached at N327. The span at 376–390 (TSTSASVSGDSSTSS) shows a compositional bias: low complexity. Over residues 420–438 (GSKQNVEDSTLSTGSATSN) the composition is skewed to polar residues. Residues N447, N514, and N528 are each glycosylated (N-linked (GlcNAc...) asparagine). Composition is skewed to polar residues over residues 496–516 (SVTE…NNLS) and 525–535 (NPTNGSSSASS). A compositionally biased stretch (basic and acidic residues) spans 538-552 (KPYEEGMRKLLKFLE). Composition is skewed to low complexity over residues 563 to 574 (SVSGMSSESSRS) and 609 to 619 (SSNSSTGSATS). N611 is a glycosylation site (N-linked (GlcNAc...) asparagine). Over residues 654–665 (GFNGPEGVGENN) the composition is skewed to gly residues. A compositionally biased stretch (low complexity) spans 677–701 (GSKSDSGSHNLSSGSGSRSNVSTGG). N-linked (GlcNAc...) asparagine glycosylation is found at N686 and N696. Over residues 722–733 (TGKTQSGSPSVA) the composition is skewed to polar residues.

In terms of processing, N-glycosylated. In terms of tissue distribution, detected in terminal tubule cells of the submandibular gland (at protein level). Expressed in submandibular salivary glands of 3-day-old males but not adults. Expression in adult submandibular glands is restricted to females. Isoform 5 is expressed in both 3-day-old and adult sublingual glands.

Its subcellular location is the secreted. The sequence is that of Submandibular gland protein C (Muc19) from Mus musculus (Mouse).